The chain runs to 305 residues: Probable L-ribulose-5-phosphate 3-epimerase UlaE (305 aa).

Belongs to the L-ribulose-5-phosphate 3-epimerase family.

The enzyme catalyses L-ribulose 5-phosphate = L-xylulose 5-phosphate. The protein operates within cofactor degradation; L-ascorbate degradation; D-xylulose 5-phosphate from L-ascorbate: step 3/4. Catalyzes the isomerization of L-xylulose-5-phosphate to L-ribulose-5-phosphate. Is involved in the anaerobic L-ascorbate utilization. The sequence is that of Probable L-ribulose-5-phosphate 3-epimerase UlaE (ulaE) from Mycoplasma pneumoniae (strain ATCC 29342 / M129 / Subtype 1) (Mycoplasmoides pneumoniae).